A 317-amino-acid chain; its full sequence is Methionyl-tRNA formyltransferase (317 aa).

113 to 116 is a (6S)-5,6,7,8-tetrahydrofolate binding site; sequence SLLP.

It belongs to the Fmt family.

The catalysed reaction is L-methionyl-tRNA(fMet) + (6R)-10-formyltetrahydrofolate = N-formyl-L-methionyl-tRNA(fMet) + (6S)-5,6,7,8-tetrahydrofolate + H(+). Attaches a formyl group to the free amino group of methionyl-tRNA(fMet). The formyl group appears to play a dual role in the initiator identity of N-formylmethionyl-tRNA by promoting its recognition by IF2 and preventing the misappropriation of this tRNA by the elongation apparatus. In Pseudomonas fluorescens (strain SBW25), this protein is Methionyl-tRNA formyltransferase.